A 1132-amino-acid polypeptide reads, in one-letter code: Telomerase reverse transcriptase (1132 aa).

Residues 1 to 230 (MPRAPRCRAV…ARRRGGSASR (230 aa)) form an RNA-interacting domain 1 region. A GQ motif region spans residues 58 to 197 (VPWDARPPPA…PHASGPRRRL (140 aa)). Positions 137 to 141 (WGLLL) are required for regulating specificity for telomeric DNA and for processivity for primer elongation. The tract at residues 210–320 (AGVPLGLPAP…SRPPRPWDTP (111 aa)) is disordered. Residues 213–234 (PLGLPAPGARRRGGSASRSLPL) show a composition bias toward low complexity. The Bipartite nuclear localization signal motif lies at 222 to 240 (RRRGGSASRSLPLPKRPRR). Ser227 carries the phosphoserine; by PKB/AKT1 modification. Positions 231 to 324 (SLPLPKRPRR…RPWDTPCPPV (94 aa)) are linker. The span at 293–304 (RHSHPSVGRQHH) shows a compositional bias: basic residues. Residues 301–538 (RQHHAGPPST…VPAAEHRLRE (238 aa)) form a required for oligomerization region. Positions 310–320 (TSRPPRPWDTP) are enriched in pro residues. An RNA-interacting domain 2 region spans residues 325–550 (YAETKHFLYS…LAKFLHWLMS (226 aa)). Residues 328-333 (TKHFLY) carry the TFLY; involved in RNA binding motif. The tract at residues 376 to 521 (PRRLPRLPQR…MSVRDCAWLR (146 aa)) is QFP motif. Positions 397–417 (LGNHAQCPYGVLLKTHCPLRA) are CP motif. The residue at position 457 (Ser457) is a Phosphoserine; by DYRK2. The region spanning 605-935 (EVRQHREARP…GLFPWCGLLL (331 aa)) is the Reverse transcriptase domain. Residue Tyr707 is modified to Phosphotyrosine; by SRC-type Tyr-kinases. Residues Asp712, Asp868, and Asp869 each contribute to the Mg(2+) site. The segment at 914–928 (LGGTAFVQMPAHGLF) is required for oligomerization. The interval 930–934 (WCGLL) is primer grip sequence. Residues 936-1132 (DTRTLEVQSD…LPSDFKTILD (197 aa)) are CTE.

It belongs to the reverse transcriptase family. Telomerase subfamily. As to quaternary structure, catalytic component of the telomerase holoenzyme complex composed of one molecule of TERT, one molecule of WRAP53/TCAB1, two molecules of H/ACA ribonucleoprotein complex subunits DKC1, NOP10, NHP2 and GAR1, and a telomerase RNA template component (TERC). The telomerase holoenzyme complex is associated with TEP1, SMG6/EST1A and POT1. The molecular chaperone HSP90/P23 complex is required for correct assembly and stabilization of the active telomerase. Interacts directly with HSP90A and PTGES3. Interacts with HSPA1A; the interaction occurs in the absence of TERC and dissociates once the complex has formed. Interacts with RAN; the interaction promotes nuclear export of TERT. Interacts with XPO1. Interacts with PTPN11; the interaction retains TERT in the nucleus. Interacts with NCL (via RRM1 and C-terminal RRM4/Arg/Gly-rich domains); the interaction is important for nucleolar localization of TERT. Interacts with SMARCA4 (via the bromodomain); the interaction regulates Wnt-mediated signaling. Interacts with MCRS1 (isoform MCRS2); the interaction inhibits in vitro telomerase activity. Interacts with PIF1; the interaction has no effect on the elongation activity of TERT. Interacts with PML; the interaction recruits TERT to PML bodies and inhibits telomerase activity. Interacts with GNL3L. Interacts with isoform 1 and isoform 2 of NVL. Interacts with DHX36. Interacts with ATF7. Phosphorylation at Tyr-707 under oxidative stress leads to translocation of TERT to the cytoplasm and reduces its antiapoptotic activity. Dephosphorylated by SHP2/PTPN11 leading to nuclear retention. Phosphorylation at Ser-227 by the AKT pathway promotes nuclear location. Phosphorylation at the G2/M phase at Ser-457 by DYRK2 promotes ubiquitination by the EDVP complex and degradation. In terms of processing, ubiquitinated by the EDVP complex, a E3 ligase complex following phosphorylation at Ser-457 by DYRK2. Ubiquitinated leads to proteasomal degradation. Post-translationally, (Microbial infection) In case of infection by HIV-1, the EDVP complex is hijacked by HIV-1 via interaction between HIV-1 Vpr and DCAF1/VPRBP, leading to ubiquitination and degradation. As to expression, expressed at a high level in thymocyte subpopulations, at an intermediate level in tonsil T-lymphocytes, and at a low to undetectable level in peripheral blood T-lymphocytes.

The protein resides in the nucleus. It localises to the nucleolus. The protein localises to the nucleoplasm. Its subcellular location is the chromosome. It is found in the telomere. The protein resides in the cytoplasm. It localises to the PML body. The enzyme catalyses DNA(n) + a 2'-deoxyribonucleoside 5'-triphosphate = DNA(n+1) + diphosphate. Telomerase is a ribonucleoprotein enzyme essential for the replication of chromosome termini in most eukaryotes. Active in progenitor and cancer cells. Inactive, or very low activity, in normal somatic cells. Catalytic component of the teleromerase holoenzyme complex whose main activity is the elongation of telomeres by acting as a reverse transcriptase that adds simple sequence repeats to chromosome ends by copying a template sequence within the RNA component of the enzyme. Catalyzes the RNA-dependent extension of 3'-chromosomal termini with the 6-nucleotide telomeric repeat unit, 5'-TTAGGG-3'. The catalytic cycle involves primer binding, primer extension and release of product once the template boundary has been reached or nascent product translocation followed by further extension. More active on substrates containing 2 or 3 telomeric repeats. Telomerase activity is regulated by a number of factors including telomerase complex-associated proteins, chaperones and polypeptide modifiers. Modulates Wnt signaling. Plays important roles in aging and antiapoptosis. This chain is Telomerase reverse transcriptase (TERT), found in Homo sapiens (Human).